The following is a 178-amino-acid chain: MFRHIFTLGPRSISAITVRSRRALSSTAKPVSAPVTSDDRPNLDVKHLKHPTKVPQQPHKSDIDRRQEPVPRISVDDQTVQLLERLSLVDLDSKEAHRTLEDSIEFASRILAIDTDGVEPLYTVLEKQKLALREDVVSDGNLQEDVLSNARITEEEYFVAPPGNIPLEQDSSGNKHKQ.

The N-terminal 31 residues, 1-31 (MFRHIFTLGPRSISAITVRSRRALSSTAKPV), are a transit peptide targeting the mitochondrion. A disordered region spans residues 26 to 67 (STAKPVSAPVTSDDRPNLDVKHLKHPTKVPQQPHKSDIDRRQ). Residues 37–46 (SDDRPNLDVK) show a composition bias toward basic and acidic residues.

This sequence belongs to the GatC family. In terms of assembly, subunit of the heterotrimeric GatCAB amidotransferase (AdT) complex, composed of A, B and C subunits.

The protein localises to the mitochondrion. The catalysed reaction is L-glutamyl-tRNA(Gln) + L-glutamine + ATP + H2O = L-glutaminyl-tRNA(Gln) + L-glutamate + ADP + phosphate + H(+). Allows the formation of correctly charged Gln-tRNA(Gln) through the transamidation of misacylated Glu-tRNA(Gln) in the mitochondria. The reaction takes place in the presence of glutamine and ATP through an activated gamma-phospho-Glu-tRNA(Gln). The sequence is that of Glutamyl-tRNA(Gln) amidotransferase subunit C, mitochondrial from Aedes aegypti (Yellowfever mosquito).